Reading from the N-terminus, the 869-residue chain is Protein translocase subunit SecA (869 aa).

ATP contacts are provided by residues Gln88, 106–110, and Asp509; that span reads GEGKT. Positions 818 to 840 are enriched in basic and acidic residues; sequence QDEGLKFNQREGEDAPAVREKKI. Positions 818–869 are disordered; the sequence is QDEGLKFNQREGEDAPAVREKKIPRNSPCPCGSGKKYKDCCGKSGPKKGILA. Zn(2+) is bound by residues Cys846, Cys848, Cys857, and Cys858.

It belongs to the SecA family. As to quaternary structure, monomer and homodimer. Part of the essential Sec protein translocation apparatus which comprises SecA, SecYEG and auxiliary proteins SecDF-YajC and YidC. Requires Zn(2+) as cofactor.

The protein resides in the cell inner membrane. The protein localises to the cytoplasm. The catalysed reaction is ATP + H2O + cellular proteinSide 1 = ADP + phosphate + cellular proteinSide 2.. Its function is as follows. Part of the Sec protein translocase complex. Interacts with the SecYEG preprotein conducting channel. Has a central role in coupling the hydrolysis of ATP to the transfer of proteins into and across the cell membrane, serving as an ATP-driven molecular motor driving the stepwise translocation of polypeptide chains across the membrane. In Campylobacter curvus (strain 525.92), this protein is Protein translocase subunit SecA.